The sequence spans 603 residues: Serine protease 56 (603 aa).

A signal peptide spans 1-19; sequence MLLAVLLLLPLPSSWFAHG. Positions 64 to 96 are disordered; that stretch reads SHECRGSGRPRPQALLQDPPEPGPCGERRPSTA. N97 is a glycosylation site (N-linked (GlcNAc...) asparagine). Residues 105–337 enclose the Peptidase S1 domain; sequence IVGGSAAPPG…FKDWLQEQMS (233 aa). A disulfide bridge connects residues C130 and C146. Residues H145 and D191 each act as charge relay system in the active site. Intrachain disulfides connect C225-C292, C256-C271, and C282-C313. S286 serves as the catalytic Charge relay system. Disordered stretches follow at residues 442–474 and 573–603; these read PARE…NGCP and EGPW…ARQP.

The protein belongs to the peptidase S1 family. As to expression, expressed neural retina, cornea, sclera and optic nerve.

In terms of biological role, serine protease required during eye development. The chain is Serine protease 56 (PRSS56) from Homo sapiens (Human).